The chain runs to 227 residues: Ribonuclease 3 (227 aa).

One can recognise an RNase III domain in the interval 4-133; the sequence is FEELEKLLDY…LIAAIYLDSD (130 aa). Residue E46 participates in Mg(2+) binding. D50 is a catalytic residue. 2 residues coordinate Mg(2+): N119 and E122. E122 is an active-site residue. The DRBM domain maps to 158-226; the sequence is DPKTALQEWA…ARELLHKLKL (69 aa).

Belongs to the ribonuclease III family. Homodimer. It depends on Mg(2+) as a cofactor.

The protein localises to the cytoplasm. It catalyses the reaction Endonucleolytic cleavage to 5'-phosphomonoester.. Functionally, digests double-stranded RNA. Involved in the processing of primary rRNA transcript to yield the immediate precursors to the large and small rRNAs (23S and 16S). Processes some mRNAs, and tRNAs when they are encoded in the rRNA operon. Processes pre-crRNA and tracrRNA of type II CRISPR loci if present in the organism. The sequence is that of Ribonuclease 3 from Rickettsia bellii (strain OSU 85-389).